Reading from the N-terminus, the 815-residue chain is Plakophilin-2 (815 aa).

Positions 1–12 (MLKPHPEHKEQP) are enriched in basic and acidic residues. Disordered stretches follow at residues 1 to 31 (MLKP…MAEE) and 76 to 105 (QLTL…ISSS). Over residues 13-25 (QDSFTPSGDSTPD) the composition is skewed to polar residues. Over residues 91–105 (SSLAESQSSCQISSS) the composition is skewed to low complexity. ARM repeat units lie at residues 317 to 357 (KGKP…NQCF), 360 to 399 (PDAK…NIVF), 402 to 442 (NENK…NLSS), 457 to 498 (PLTD…NLSS), 501 to 547 (PDGR…NLSY), 604 to 644 (PHGV…NLTA), 652 to 691 (AIAH…NISR), 693 to 737 (RELH…NLSQ), and 740 to 783 (ASNT…TLWR).

The protein belongs to the beta-catenin family.

The protein localises to the nucleus. The protein resides in the cell junction. Its subcellular location is the desmosome. It is found in the cytoplasm. Its function is as follows. Required for development of the heart, potentially via cell-cell adhesion and modulation of expression of cardiac precursor genes. Plays a role in desmosome cell-cell junctions and their intracellular connectivity. The protein is Plakophilin-2 of Danio rerio (Zebrafish).